A 290-amino-acid chain; its full sequence is Endoplasmic reticulum-Golgi intermediate compartment protein 1 (290 aa).

The Cytoplasmic portion of the chain corresponds to 1 to 27 (MSFDVRRFDIYRKVPKDLTQPTYTGAF). The helical transmembrane segment at 28-48 (ISICCCVFMLFLFLSELTGFI) threads the bilayer. Topologically, residues 49–254 (ATEIVNELYV…RRRPFYRFIT (206 aa)) are lumenal. A glycan (N-linked (GlcNAc...) asparagine) is linked at N74. Residues 255–275 (TICAIIGGTFTVAGIIDSCIF) form a helical membrane-spanning segment. Residues 276 to 290 (TASEAWKKIQIGKMS) are Cytoplasmic-facing.

The protein belongs to the ERGIC family.

It is found in the endoplasmic reticulum membrane. Its subcellular location is the endoplasmic reticulum-Golgi intermediate compartment membrane. The protein resides in the golgi apparatus membrane. Functionally, possible role in transport between endoplasmic reticulum and Golgi. The chain is Endoplasmic reticulum-Golgi intermediate compartment protein 1 (ergic1) from Danio rerio (Zebrafish).